Here is a 328-residue protein sequence, read N- to C-terminus: Formimidoylglutamase (328 aa).

Mn(2+)-binding residues include histidine 133, aspartate 159, histidine 161, aspartate 163, aspartate 253, and aspartate 255.

The protein belongs to the arginase family. Mn(2+) is required as a cofactor.

The enzyme catalyses N-formimidoyl-L-glutamate + H2O = formamide + L-glutamate. It participates in amino-acid degradation; L-histidine degradation into L-glutamate; L-glutamate from N-formimidoyl-L-glutamate (hydrolase route): step 1/1. Functionally, catalyzes the conversion of N-formimidoyl-L-glutamate to L-glutamate and formamide. This is Formimidoylglutamase from Streptococcus pyogenes serotype M3 (strain ATCC BAA-595 / MGAS315).